Reading from the N-terminus, the 128-residue chain is Cyclic ether formation enzyme gkaZ (128 aa).

The signal sequence occupies residues 1–36 (MTTARALSDGLAYLLACFNAFCIQAHLTSRFSPAFS). Helical transmembrane passes span 61–81 (LRYM…LPGW) and 107–127 (WLLH…AIYV).

This sequence belongs to the cyclic ether formation enzyme xenC family.

The protein localises to the membrane. It participates in mycotoxin biosynthesis. Cyclic ether formation enzyme; part of the gene cluster that mediates the biosynthesis of GKK1032, fungal natural products containing a macrocyclic para-cyclophane connected to a decahydrofluorene ring system that show potent antitumor activities. Within the pathway, gkaZ functions synergistically with gkaB and gkaX to form the cyclophane. The pathway begins with the PKS-NRPS gkaA which, with the help of the trans-enoyl reductase gkaC, synthesizes the polyketide-tyrosyl acyl thioester product which can be reductively off-loaded by the terminal reductase (R) domain in gkaA. The alpha/beta hydrolase gkaG is then required to catalyze the subsequent Knoevenagel condensation that affords the 3-pyrrolin-2-one ring, whereas the three proteins gkaB, gkaX and gkaZ then function synergistically to form the cyclophane. The chain is Cyclic ether formation enzyme gkaZ from Penicillium citrinum.